Here is an 820-residue protein sequence, read N- to C-terminus: Leucine--tRNA ligase (820 aa).

Residues 42–52 (PYPSGDLHMGH) carry the 'HIGH' region motif. The short motif at 576-580 (KMSKS) is the 'KMSKS' region element. Lys579 lines the ATP pocket.

It belongs to the class-I aminoacyl-tRNA synthetase family.

The protein resides in the cytoplasm. It carries out the reaction tRNA(Leu) + L-leucine + ATP = L-leucyl-tRNA(Leu) + AMP + diphosphate. The protein is Leucine--tRNA ligase of Coxiella burnetii (strain RSA 331 / Henzerling II).